We begin with the raw amino-acid sequence, 582 residues long: Potassium-transporting ATPase potassium-binding subunit (582 aa).

Transmembrane regions (helical) follow at residues 6–26 (LVQL…LGLY), 65–85 (IYAL…YVLE), 87–107 (LQGG…FVAV), 136–156 (GLAV…VALI), 178–198 (VLYI…WQGV), 277–297 (LEML…GVMI), 304–324 (LAIL…TLAA), 402–422 (GLYG…LMVG), 441–461 (ALVI…AAVI), 505–525 (IAGA…VLAL), and 546–566 (GGIF…LTFV).

It belongs to the KdpA family. In terms of assembly, the system is composed of three essential subunits: KdpA, KdpB and KdpC.

Its subcellular location is the cell inner membrane. Part of the high-affinity ATP-driven potassium transport (or Kdp) system, which catalyzes the hydrolysis of ATP coupled with the electrogenic transport of potassium into the cytoplasm. This subunit binds the periplasmic potassium ions and delivers the ions to the membrane domain of KdpB through an intramembrane tunnel. This is Potassium-transporting ATPase potassium-binding subunit from Solidesulfovibrio magneticus (strain ATCC 700980 / DSM 13731 / RS-1) (Desulfovibrio magneticus).